Consider the following 140-residue polypeptide: Large ribosomal subunit protein bL17 (140 aa).

It belongs to the bacterial ribosomal protein bL17 family. In terms of assembly, part of the 50S ribosomal subunit. Contacts protein L32.

The sequence is that of Large ribosomal subunit protein bL17 from Rhizobium rhizogenes (strain K84 / ATCC BAA-868) (Agrobacterium radiobacter).